The sequence spans 128 residues: Fluoride-specific ion channel FluC (128 aa).

Transmembrane regions (helical) follow at residues 5-25, 35-55, 67-87, and 96-116; these read IVAIFVGAGLGALLRWFLSIG, LGTLVSNLIGGYLIGIAVVAF, LFVITGFMGGLTTFSTYSVEV, and FGWALAVAALHLIGSFTLTGL. Na(+) contacts are provided by Gly-75 and Thr-78.

The protein belongs to the fluoride channel Fluc/FEX (TC 1.A.43) family.

It is found in the cell inner membrane. The enzyme catalyses fluoride(in) = fluoride(out). Na(+) is not transported, but it plays an essential structural role and its presence is essential for fluoride channel function. In terms of biological role, fluoride-specific ion channel. Important for reducing fluoride concentration in the cell, thus reducing its toxicity. The polypeptide is Fluoride-specific ion channel FluC (Burkholderia thailandensis (strain ATCC 700388 / DSM 13276 / CCUG 48851 / CIP 106301 / E264)).